The sequence spans 175 residues: uncharacterized protein (175 aa).

Residues 1–14 (MNTSSRIQLPSSND) are compositionally biased toward polar residues. 2 disordered regions span residues 1–31 (MNTS…SKRS) and 127–175 (ARSR…QSKR). The span at 16-27 (HVYDGRSNEPKA) shows a compositional bias: basic and acidic residues. The segment covering 130 to 149 (RASSVSNSRLNSRTNSSVSL) has biased composition (low complexity). Positions 154–175 (GSSSWKNKIKNAVSNVTDQSKR) are enriched in polar residues.

It localises to the cytoplasm. The protein resides in the nucleus. This is an uncharacterized protein from Schizosaccharomyces pombe (strain 972 / ATCC 24843) (Fission yeast).